The sequence spans 290 residues: ATP synthase gamma chain (290 aa).

The protein belongs to the ATPase gamma chain family. In terms of assembly, F-type ATPases have 2 components, CF(1) - the catalytic core - and CF(0) - the membrane proton channel. CF(1) has five subunits: alpha(3), beta(3), gamma(1), delta(1), epsilon(1). CF(0) has three main subunits: a, b and c.

It localises to the cell inner membrane. Produces ATP from ADP in the presence of a proton gradient across the membrane. The gamma chain is believed to be important in regulating ATPase activity and the flow of protons through the CF(0) complex. This is ATP synthase gamma chain from Delftia acidovorans (strain DSM 14801 / SPH-1).